We begin with the raw amino-acid sequence, 615 residues long: Dihydroxy-acid dehydratase (615 aa).

Asp-81 contributes to the Mg(2+) binding site. Residue Cys-122 participates in [2Fe-2S] cluster binding. Mg(2+) is bound by residues Asp-123 and Lys-124. Lys-124 is subject to N6-carboxylysine. Cys-195 is a binding site for [2Fe-2S] cluster. Position 491 (Glu-491) interacts with Mg(2+). The active-site Proton acceptor is the Ser-517.

The protein belongs to the IlvD/Edd family. In terms of assembly, homodimer. The cofactor is [2Fe-2S] cluster. Requires Mg(2+) as cofactor.

It catalyses the reaction (2R)-2,3-dihydroxy-3-methylbutanoate = 3-methyl-2-oxobutanoate + H2O. It carries out the reaction (2R,3R)-2,3-dihydroxy-3-methylpentanoate = (S)-3-methyl-2-oxopentanoate + H2O. Its pathway is amino-acid biosynthesis; L-isoleucine biosynthesis; L-isoleucine from 2-oxobutanoate: step 3/4. It participates in amino-acid biosynthesis; L-valine biosynthesis; L-valine from pyruvate: step 3/4. Its function is as follows. Functions in the biosynthesis of branched-chain amino acids. Catalyzes the dehydration of (2R,3R)-2,3-dihydroxy-3-methylpentanoate (2,3-dihydroxy-3-methylvalerate) into 2-oxo-3-methylpentanoate (2-oxo-3-methylvalerate) and of (2R)-2,3-dihydroxy-3-methylbutanoate (2,3-dihydroxyisovalerate) into 2-oxo-3-methylbutanoate (2-oxoisovalerate), the penultimate precursor to L-isoleucine and L-valine, respectively. The chain is Dihydroxy-acid dehydratase from Pseudoalteromonas atlantica (strain T6c / ATCC BAA-1087).